The primary structure comprises 393 residues: Methylthioribose kinase (393 aa).

ATP contacts are provided by residues Asn-38, Lys-53, and 107-109; that span reads EDL. Residue Asp-225 participates in substrate binding. 242-244 is an ATP binding site; it reads DPE. A substrate-binding site is contributed by Arg-332.

Belongs to the methylthioribose kinase family. Homodimer.

It catalyses the reaction 5-(methylsulfanyl)-D-ribose + ATP = 5-(methylsulfanyl)-alpha-D-ribose 1-phosphate + ADP + H(+). It functions in the pathway amino-acid biosynthesis; L-methionine biosynthesis via salvage pathway; S-methyl-5-thio-alpha-D-ribose 1-phosphate from S-methyl-5'-thioadenosine (hydrolase route): step 2/2. Functionally, catalyzes the phosphorylation of methylthioribose into methylthioribose-1-phosphate. The protein is Methylthioribose kinase of Bacillus cereus (strain ATCC 10987 / NRS 248).